Reading from the N-terminus, the 599-residue chain is Proteasome-associated ATPase (599 aa).

The interval 1–22 is disordered; that stretch reads MPHGHPGSQPDEGGELSNGSSS. A coiled-coil region spans residues 21–97; sequence SSGELTAQIR…LREEVDRLAQ (77 aa). 286-291 serves as a coordination point for ATP; it reads GCGKTL. A docks into pockets in the proteasome alpha-ring region spans residues 598-599; sequence YL.

It belongs to the AAA ATPase family. As to quaternary structure, homohexamer. Assembles into a hexameric ring structure that caps the 20S proteasome core. Strongly interacts with the prokaryotic ubiquitin-like protein Pup through a hydrophobic interface; the interacting region of ARC lies in its N-terminal coiled-coil domain. There is one Pup binding site per ARC hexamer ring. Upon ATP-binding, the C-terminus of ARC interacts with the alpha-rings of the proteasome core, possibly by binding to the intersubunit pockets.

The protein operates within protein degradation; proteasomal Pup-dependent pathway. ATPase which is responsible for recognizing, binding, unfolding and translocation of pupylated proteins into the bacterial 20S proteasome core particle. May be essential for opening the gate of the 20S proteasome via an interaction with its C-terminus, thereby allowing substrate entry and access to the site of proteolysis. Thus, the C-termini of the proteasomal ATPase may function like a 'key in a lock' to induce gate opening and therefore regulate proteolysis. This Actinosynnema mirum (strain ATCC 29888 / DSM 43827 / JCM 3225 / NBRC 14064 / NCIMB 13271 / NRRL B-12336 / IMRU 3971 / 101) protein is Proteasome-associated ATPase.